The sequence spans 521 residues: Bifunctional purine biosynthesis protein PurH (521 aa).

One can recognise an MGS-like domain in the interval 1-147; it reads MAKITRALIS…KNNADVTVVV (147 aa).

The protein belongs to the PurH family.

It carries out the reaction (6R)-10-formyltetrahydrofolate + 5-amino-1-(5-phospho-beta-D-ribosyl)imidazole-4-carboxamide = 5-formamido-1-(5-phospho-D-ribosyl)imidazole-4-carboxamide + (6S)-5,6,7,8-tetrahydrofolate. It catalyses the reaction IMP + H2O = 5-formamido-1-(5-phospho-D-ribosyl)imidazole-4-carboxamide. It participates in purine metabolism; IMP biosynthesis via de novo pathway; 5-formamido-1-(5-phospho-D-ribosyl)imidazole-4-carboxamide from 5-amino-1-(5-phospho-D-ribosyl)imidazole-4-carboxamide (10-formyl THF route): step 1/1. The protein operates within purine metabolism; IMP biosynthesis via de novo pathway; IMP from 5-formamido-1-(5-phospho-D-ribosyl)imidazole-4-carboxamide: step 1/1. In Geobacter metallireducens (strain ATCC 53774 / DSM 7210 / GS-15), this protein is Bifunctional purine biosynthesis protein PurH.